The chain runs to 218 residues: Glutathione S-transferase PM239X14 (218 aa).

The 84-residue stretch at 2–85 (VTVKLYGMAY…YLVAKYGKGS (84 aa)) folds into the GST N-terminal domain. Glutathione-binding positions include 12 to 13 (ST), 41 to 42 (HK), 55 to 56 (VI), and 69 to 70 (ES). In terms of domain architecture, GST C-terminal spans 93-218 (DPKAYGLFEQ…LLRNSSKEFM (126 aa)).

This sequence belongs to the GST superfamily. Phi family. Expressed in vegetative rosettes.

It localises to the cytoplasm. The protein localises to the cytosol. The catalysed reaction is RX + glutathione = an S-substituted glutathione + a halide anion + H(+). Specifically catalyzes the conjugation of synthetic 1-chloro-2,4-ditrobenzene to GSH. Also functions as a glutathione peroxidase, converting linoleate oxidation products into their corresponding hydroxyacids. This enzyme may thus serve to protect the cell from oxygen toxicity as well as from exogenous toxins such as herbicides. This chain is Glutathione S-transferase PM239X14, found in Arabidopsis thaliana (Mouse-ear cress).